A 331-amino-acid chain; its full sequence is Tungstate uptake system ATP-binding protein TupC (331 aa).

In terms of domain architecture, ABC transporter spans Ile-2–Ile-230. Gly-34–Ser-41 serves as a coordination point for ATP.

The protein belongs to the ABC transporter superfamily. In terms of assembly, the complex is composed of two ATP-binding proteins (TupC), two transmembrane proteins (TupB) and a solute-binding protein (TupA).

The catalysed reaction is tungstate(in) + ATP + H2O = tungstate(out) + ADP + phosphate + H(+). Functionally, part of an ABC transporter complex involved in ultra-high affinity tungstate uptake. Probably responsible for energy coupling to the transport system. The sequence is that of Tungstate uptake system ATP-binding protein TupC from Campylobacter jejuni subsp. jejuni serotype O:2 (strain ATCC 700819 / NCTC 11168).